We begin with the raw amino-acid sequence, 702 residues long: Elongation factor G (702 aa).

Residues 8–290 (SRYRNIGISA…AVIEYLPSPT (283 aa)) enclose the tr-type G domain. Residues 17–24 (AHIDAGKT), 88–92 (DTPGH), and 142–145 (NKMD) contribute to the GTP site.

Belongs to the TRAFAC class translation factor GTPase superfamily. Classic translation factor GTPase family. EF-G/EF-2 subfamily.

The protein localises to the cytoplasm. Functionally, catalyzes the GTP-dependent ribosomal translocation step during translation elongation. During this step, the ribosome changes from the pre-translocational (PRE) to the post-translocational (POST) state as the newly formed A-site-bound peptidyl-tRNA and P-site-bound deacylated tRNA move to the P and E sites, respectively. Catalyzes the coordinated movement of the two tRNA molecules, the mRNA and conformational changes in the ribosome. In Edwardsiella ictaluri (strain 93-146), this protein is Elongation factor G.